Reading from the N-terminus, the 595-residue chain is Coronatine-insensitive protein homolog 1a (595 aa).

Residues 20-62 form the F-box domain; sequence WVPDEALHLVMGHVEDPRDREAASRVCRRWHRIDALTRKHVTV. Arginine 90, arginine 351, tyrosine 389, arginine 412, and arginine 499 together coordinate jasmonate.

In terms of assembly, interacts with TIFY6A/JAZ3, TIFY6B/JAZ4 and TIFY11D/JAZ12 in a coronatine-dependent manner. Interacts with TIFY9/JAZ5, TIFY10A/JAZ6, TIFY10B/JAZ7, TIFY11A/JAZ9 and TIFY11C/JAZ11 in a coronatine-dependent manner.

Functionally, involved in jasmonate (JA) signaling. Required for jasmonate signaling in plant defense responses. Can complement Arabidopsis coi1-1 mutant and restore jasmonate signaling. Required for JA-regulated defense responses to infestation by the leaffolder Cnaphalocrocis medinalis. May act on an initial response of jasmonate-regulated gene expression toward drought tolerance as part of a BHLH148-TIFY11D/JAZ12-COI1A complex. Component of SCF(COI1) E3 ubiquitin ligase complexes, which may mediate the ubiquitination and subsequent proteasomal degradation of target proteins, including TIFY/JAZ family. The polypeptide is Coronatine-insensitive protein homolog 1a (Oryza sativa subsp. indica (Rice)).